The primary structure comprises 162 residues: Protein-export protein SecB (162 aa).

This sequence belongs to the SecB family. As to quaternary structure, homotetramer, a dimer of dimers. One homotetramer interacts with 1 SecA dimer.

It localises to the cytoplasm. Its function is as follows. One of the proteins required for the normal export of preproteins out of the cell cytoplasm. It is a molecular chaperone that binds to a subset of precursor proteins, maintaining them in a translocation-competent state. It also specifically binds to its receptor SecA. This is Protein-export protein SecB from Hamiltonella defensa subsp. Acyrthosiphon pisum (strain 5AT).